We begin with the raw amino-acid sequence, 494 residues long: Ceramide glucosyltransferase (494 aa).

Residues 1 to 6 (MPLLMD) are Lumenal-facing. A helical transmembrane segment spans residues 7–27 (GLAYAGAIWSLIVFCVQAIGL). The Cytoplasmic portion of the chain corresponds to 28–337 (YQLFRSYSRP…VRWLRVRKWT (310 aa)). A short sequence motif (D1) is located at residue Asp95. Asp160 is a short sequence motif (D2). Residue Asp285 is a short sequence motif, D3. Asp285 functions as the Proton acceptor in the catalytic mechanism. The short motif at 326 to 330 (RRVRW) is the (Q/R)XXRW element. Residues 338–358 (VLLATLVEPGVESMVCCMAFA) form a helical membrane-spanning segment. Topologically, residues 359–380 (HALTTTPWCPNPADWPIPHTWT) are lumenal. A helical membrane pass occupies residues 381 to 401 (ALWSIWLAAIAVWATLDYVVY). Residues 402–428 (HFLHSCRSIEKDADSPDFAQGNELMKR) are Cytoplasmic-facing. The helical transmembrane segment at 429–449 (PFGAWILAWIGREILALPIWT) threads the bilayer. Over 450–494 (RAVLLGTTVTWRGTKFKVRPDQSVVDIPNAGAKSNGIGSTNRKVR) the chain is Lumenal.

It belongs to the glycosyltransferase 2 family.

The protein localises to the golgi apparatus membrane. The enzyme catalyses an N-acylsphing-4-enine + UDP-alpha-D-glucose = a beta-D-glucosyl-(1&lt;-&gt;1')-N-acylsphing-4-enine + UDP + H(+). Its pathway is lipid metabolism; sphingolipid metabolism. Functionally, catalyzes the final step in the biosynthesis of the membrane lipid glucosylceramide (GluCer), the transfer of glucose to ceramide. Glucosylceramides play important roles in growth, differentiation and pathogenicity. This chain is Ceramide glucosyltransferase, found in Pyricularia oryzae (strain 70-15 / ATCC MYA-4617 / FGSC 8958) (Rice blast fungus).